A 297-amino-acid polypeptide reads, in one-letter code: Heterogeneous nuclear ribonucleoprotein D-like (297 aa).

Positions 1-21 are disordered; sequence MTGFGATPDFNEGSKINASKN. RRM domains lie at 26–108 and 111–190; these read GKMF…KGKE and KKVF…QPKE. A disordered region spans residues 192–224; it reads YRQQQQKQQKGGRGAATGRGGARGRGRGQGWNQ. A compositionally biased stretch (gly residues) spans 202–222; it reads GGRGAATGRGGARGRGRGQGW.

It localises to the nucleus. The protein resides in the cytoplasm. In terms of biological role, acts as a transcriptional regulator. Binds DNA and RNA. The sequence is that of Heterogeneous nuclear ribonucleoprotein D-like (hnrnpdl) from Xenopus tropicalis (Western clawed frog).